Consider the following 610-residue polypeptide: Pentatricopeptide repeat-containing protein At3g15590, mitochondrial (610 aa).

The N-terminal 71 residues, 1-71 (MYSLSRILQR…FSRFFGIHKL (71 aa)), are a transit peptide targeting the mitochondrion. The segment at 88–142 (EELSESEEAVPVSGDVPEGVVDDDSLFEPELGSDNDDLEIEEKHSKDGGKPTKKR) is disordered. The segment covering 107 to 127 (VVDDDSLFEPELGSDNDDLEI) has biased composition (acidic residues). Over residues 128–137 (EEKHSKDGGK) the composition is skewed to basic and acidic residues. PPR repeat units follow at residues 241–275 (GEVV…KFPT), 276–309 (SVFA…NIKP), 310–344 (SRAT…GIEL), 345–379 (DPEL…GLQQ), 380–410 (TPWV…VDQN), 412–442 (RYDN…LVEK), 447–481 (PMMP…GIAI), 482–517 (GPST…KMRP), and 518–552 (MFTT…SYAA).

The protein belongs to the PPR family. P subfamily.

It is found in the mitochondrion. The sequence is that of Pentatricopeptide repeat-containing protein At3g15590, mitochondrial from Arabidopsis thaliana (Mouse-ear cress).